The following is a 397-amino-acid chain: NADH-quinone oxidoreductase subunit H (397 aa).

Transmembrane regions (helical) follow at residues 7 to 27 (ALLI…TAFA), 78 to 98 (LVYT…FGGI), 120 to 140 (ILAL…GGWA), 164 to 184 (MGLS…LDIV), 195 to 215 (WLIL…FAEV), 247 to 267 (MAEY…FFGG), 283 to 303 (SWPL…FIWV), 322 to 342 (LTLP…AFVP), and 353 to 373 (WLLG…SDAV).

Belongs to the complex I subunit 1 family. In terms of assembly, NDH-1 is composed of 15 different subunits. Subunits NuoA, H, J, K, L, M, N constitute the membrane sector of the complex.

The protein localises to the cell membrane. It carries out the reaction a quinone + NADH + 5 H(+)(in) = a quinol + NAD(+) + 4 H(+)(out). NDH-1 shuttles electrons from NADH, via FMN and iron-sulfur (Fe-S) centers, to quinones in the respiratory chain. The immediate electron acceptor for the enzyme in this species is believed to be ubiquinone. Couples the redox reaction to proton translocation (for every two electrons transferred, four hydrogen ions are translocated across the cytoplasmic membrane), and thus conserves the redox energy in a proton gradient. This subunit may bind ubiquinone. The polypeptide is NADH-quinone oxidoreductase subunit H (Deinococcus radiodurans (strain ATCC 13939 / DSM 20539 / JCM 16871 / CCUG 27074 / LMG 4051 / NBRC 15346 / NCIMB 9279 / VKM B-1422 / R1)).